A 710-amino-acid chain; its full sequence is Pentatricopeptide repeat-containing protein At3g14330 (710 aa).

PPR repeat units lie at residues 166–196 (NPKL…VTDS), 200–234 (TEKV…FIEP), 235–269 (GNFS…KEKV), 270–304 (DQVV…NVVT), 305–331 (WNSL…MQEE), 336–370 (SWAT…KEKP), 371–401 (DVPL…MLTK), 402–436 (DLAS…GVAP), 437–467 (DGIT…MKTE), and 473–503 (ALEH…MPFK). Residues 508-583 (IWGSLLNSCR…EAGCSWVQVK (76 aa)) form a type E motif region. The tract at residues 584–615 (DKIQIFVAGGGYEFRNSDEYKKVWTELQEAIE) is type E(+) motif. Residues 616-710 (KSGYSPNTSV…DGICSCKDYW (95 aa)) form a type DYW motif region.

The protein belongs to the PPR family. PCMP-H subfamily.

This is Pentatricopeptide repeat-containing protein At3g14330 (PCMP-H57) from Arabidopsis thaliana (Mouse-ear cress).